The following is a 551-amino-acid chain: Cleavage and polyadenylation specificity factor subunit 6 (551 aa).

A necessary for interaction with NXF1 region spans residues 1–213; the sequence is MADGVDHIDI…RGRFPGAVPG (213 aa). Positions 81 to 161 constitute an RRM domain; it reads IALYIGNLTW…QNPVVTPCNK (81 aa). The segment at 81 to 161 is necessary for interaction with NUDT21/CPSF5; the sequence is IALYIGNLTW…QNPVVTPCNK (81 aa). Residues 81 to 161 form a necessary for nuclear paraspeckles localization region; that stretch reads IALYIGNLTW…QNPVVTPCNK (81 aa). Residue threonine 157 is modified to Phosphothreonine. Over residues 169 to 180 the composition is skewed to polar residues; the sequence is MQSRKTTQSGQM. 2 disordered regions span residues 169–411 and 477–551; these read MQSR…PLSE and LHGI…YRHR. The GAR motif lies at 202–206; it reads RGRGR. Residues 207-219 show a composition bias toward low complexity; sequence FPGAVPGGDRFPG. Pro residues-rich tracts occupy residues 220–265, 285–366, and 377–388; these read PAGP…PLAG, GQPP…PPPT, and GPPPTDPYGRPP. Residues 389 to 404 show a composition bias toward basic and acidic residues; that stretch reads PYDRGDYGPPGREMDT. A phosphothreonine mark is found at threonine 404 and threonine 407. Residues 404–551 form a sufficient for nuclear speckle localization region; it reads TARTPLSEAE…RDREREYRHR (148 aa). Positions 405–551 are necessary for RNA-binding; it reads ARTPLSEAEF…RDREREYRHR (147 aa). Positions 481–551 are necessary for interaction with SRSF3, SRSF7 and TRA2B/SFRS10; sequence ESKSYGSGSR…RDREREYRHR (71 aa). Basic and acidic residues predominate over residues 489 to 503; that stretch reads SRRERSRERDHSRSR. The interval 490–551 is arg/Ser-rich domain; sequence RRERSRERDH…RDREREYRHR (62 aa). A phosphoserine mark is found at serine 494, serine 500, serine 511, serine 513, and serine 525. Residues 504 to 514 show a composition bias toward basic residues; the sequence is EKSRRHKSRSR. A sufficient for nuclear targeting region spans residues 510–551; the sequence is KSRSRDRHDDYYRERSRERERHRDRDRDRDRERDREREYRHR. Residues 515–551 are compositionally biased toward basic and acidic residues; sequence DRHDDYYRERSRERERHRDRDRDRDRERDREREYRHR.

This sequence belongs to the RRM CPSF6/7 family. As to quaternary structure, component of the cleavage factor Im (CFIm) complex which is a heterotetramer composed of two subunits of NUDT21/CPSF5 and two subunits of CPSF6 or CPSF7 or a heterodimer of CPSF6 and CPSF7. The cleavage factor Im (CFIm) complex associates with the CPSF and CSTF complexes to promote the assembly of the core mRNA 3'-processing machinery. Associates with the exon junction complex (EJC). Associates with the 80S ribosome particle. Interacts (via the RRM domain) with NUDT21/CPSF5; this interaction is direct and enhances binding to RNA. Interacts (via Arg/Ser-rich domain) with FIP1L1 (preferentially via unphosphorylated form and Arg/Glu/Asp-rich domain); this interaction mediates, at least in part, the interaction between the CFIm and CPSF complexes and may be inhibited by CPSF6 hyper-phosphorylation. Interacts (via N-terminus) with NXF1; this interaction is direct. Interacts with SRSF3. Interacts with SRSF7. Interacts with SNRNP70. Interacts with TRA2B/SFRS10. Interacts with UPF1. Interacts with UPF3B. Interacts with VIRMA. Interacts (via Arg/Ser-rich domain) with TNPO3; promoting nuclear import of CPSF6 independently of its phosphorylation status. Interacts with YTHDC1. Post-translationally, phosphorylated. Phosphorylated in the Arg/Ser-rich domain by SRPK1, in vitro. In terms of processing, symmetrically dimethylated on arginine residues in the GAR motif by PRMT5 in a WDR77- and CLNS1A-dependent manner. Asymmetrically dimethylated on arginine residues in the GAR motif by PRMT1.

It localises to the nucleus. The protein resides in the nucleoplasm. Its subcellular location is the nucleus speckle. It is found in the cytoplasm. Component of the cleavage factor Im (CFIm) complex that functions as an activator of the pre-mRNA 3'-end cleavage and polyadenylation processing required for the maturation of pre-mRNA into functional mRNAs. CFIm contributes to the recruitment of multiprotein complexes on specific sequences on the pre-mRNA 3'-end, so called cleavage and polyadenylation signals (pA signals). Most pre-mRNAs contain multiple pA signals, resulting in alternative cleavage and polyadenylation (APA) producing mRNAs with variable 3'-end formation. The CFIm complex acts as a key regulator of cleavage and polyadenylation site choice during APA through its binding to 5'-UGUA-3' elements localized in the 3'-untranslated region (UTR) for a huge number of pre-mRNAs. CPSF6 enhances NUDT21/CPSF5 binding to 5'-UGUA-3' elements localized upstream of pA signals and promotes RNA looping, and hence activates directly the mRNA 3'-processing machinery. Plays a role in mRNA export. This is Cleavage and polyadenylation specificity factor subunit 6 from Bos taurus (Bovine).